Consider the following 309-residue polypeptide: Homoserine O-succinyltransferase (309 aa).

Cysteine 142 acts as the Acyl-thioester intermediate in catalysis. Positions 163 and 192 each coordinate substrate. Histidine 235 (proton acceptor) is an active-site residue. The active site involves glutamate 237. Arginine 249 contributes to the substrate binding site.

The protein belongs to the MetA family. Homodimer.

The protein localises to the cytoplasm. The catalysed reaction is L-homoserine + succinyl-CoA = O-succinyl-L-homoserine + CoA. It participates in amino-acid biosynthesis; L-methionine biosynthesis via de novo pathway; O-succinyl-L-homoserine from L-homoserine: step 1/1. Functionally, transfers a succinyl group from succinyl-CoA to L-homoserine, forming succinyl-L-homoserine. This is Homoserine O-succinyltransferase from Escherichia fergusonii (strain ATCC 35469 / DSM 13698 / CCUG 18766 / IAM 14443 / JCM 21226 / LMG 7866 / NBRC 102419 / NCTC 12128 / CDC 0568-73).